The primary structure comprises 692 residues: Elongation factor G (692 aa).

In terms of domain architecture, tr-type G spans 8-282 (EKTRNIGIMA…AVLDYLPAPT (275 aa)). GTP contacts are provided by residues 17-24 (AHIDAGKT), 81-85 (DTPGH), and 135-138 (NKMD).

The protein belongs to the TRAFAC class translation factor GTPase superfamily. Classic translation factor GTPase family. EF-G/EF-2 subfamily.

It is found in the cytoplasm. Its function is as follows. Catalyzes the GTP-dependent ribosomal translocation step during translation elongation. During this step, the ribosome changes from the pre-translocational (PRE) to the post-translocational (POST) state as the newly formed A-site-bound peptidyl-tRNA and P-site-bound deacylated tRNA move to the P and E sites, respectively. Catalyzes the coordinated movement of the two tRNA molecules, the mRNA and conformational changes in the ribosome. This Bacillus licheniformis (strain ATCC 14580 / DSM 13 / JCM 2505 / CCUG 7422 / NBRC 12200 / NCIMB 9375 / NCTC 10341 / NRRL NRS-1264 / Gibson 46) protein is Elongation factor G.